A 741-amino-acid polypeptide reads, in one-letter code: Photosystem I P700 chlorophyll a apoprotein A2 1 (741 aa).

8 helical membrane-spanning segments follow: residues 46 to 69, 135 to 158, 175 to 199, 273 to 291, 334 to 357, 373 to 399, 421 to 443, and 524 to 542; these read IFAT…FHVA, LYTG…LHLQ, LNHH…HVAI, MAHH…GHMY, LHFQ…QHMY, AALY…IFLV, AIIS…LYVH, and FLVH…LILV. Residues Cys566 and Cys575 each contribute to the [4Fe-4S] cluster site. 2 helical membrane-spanning segments follow: residues 582–603 and 650–672; these read SFYL…YWHW and LSVW…MFLI. Chlorophyll a contacts are provided by His661, Met669, and Tyr677. Trp678 is a binding site for phylloquinone. Residues 714 to 734 traverse the membrane as a helical segment; sequence VVGLAHFTVGYVLTYAAFLIA.

Belongs to the PsaA/PsaB family. The PsaA/B heterodimer binds the P700 chlorophyll special pair and subsequent electron acceptors. PSI consists of a core antenna complex that captures photons, and an electron transfer chain that converts photonic excitation into a charge separation. The cyanobacterial PSI reaction center is composed of one copy each of PsaA,B,C,D,E,F,I,J,K,L,M and X, and forms trimeric complexes. PSI electron transfer chain: 5 chlorophyll a, 1 chlorophyll a', 2 phylloquinones and 3 4Fe-4S clusters. PSI core antenna: 90 chlorophyll a, 22 carotenoids, 3 phospholipids and 1 galactolipid. P700 is a chlorophyll a/chlorophyll a' dimer, A0 is one or more chlorophyll a, A1 is one or both phylloquinones and FX is a shared 4Fe-4S iron-sulfur center. is required as a cofactor.

It is found in the cellular thylakoid membrane. It catalyses the reaction reduced [plastocyanin] + hnu + oxidized [2Fe-2S]-[ferredoxin] = oxidized [plastocyanin] + reduced [2Fe-2S]-[ferredoxin]. In terms of biological role, psaA and PsaB bind P700, the primary electron donor of photosystem I (PSI), as well as the electron acceptors A0, A1 and FX. PSI is a plastocyanin/cytochrome c6-ferredoxin oxidoreductase, converting photonic excitation into a charge separation, which transfers an electron from the donor P700 chlorophyll pair to the spectroscopically characterized acceptors A0, A1, FX, FA and FB in turn. Oxidized P700 is reduced on the lumenal side of the thylakoid membrane by plastocyanin or cytochrome c6. This is Photosystem I P700 chlorophyll a apoprotein A2 1 (psaB1) from Nostoc sp. (strain PCC 7120 / SAG 25.82 / UTEX 2576).